The following is a 195-amino-acid chain: Probable molybdenum cofactor guanylyltransferase (195 aa).

GTP contacts are provided by residues 6–8 (LAG), K18, D67, and D93. D93 is a binding site for Mg(2+).

The protein belongs to the MobA family. Mg(2+) is required as a cofactor.

It localises to the cytoplasm. The enzyme catalyses Mo-molybdopterin + GTP + H(+) = Mo-molybdopterin guanine dinucleotide + diphosphate. In terms of biological role, transfers a GMP moiety from GTP to Mo-molybdopterin (Mo-MPT) cofactor (Moco or molybdenum cofactor) to form Mo-molybdopterin guanine dinucleotide (Mo-MGD) cofactor. This Thermococcus sibiricus (strain DSM 12597 / MM 739) protein is Probable molybdenum cofactor guanylyltransferase.